Here is a 1232-residue protein sequence, read N- to C-terminus: Nitrate reductase alpha subunit (1232 aa).

Residues 53–117 enclose the 4Fe-4S Mo/W bis-MGD-type domain; the sequence is DKVVRSTHGV…SFSWYSYSPT (65 aa). [4Fe-4S] cluster is bound by residues His60, Cys64, Cys68, and Cys103. Residue Asp233 participates in Mo-bis(molybdopterin guanine dinucleotide) binding.

The protein belongs to the prokaryotic molybdopterin-containing oxidoreductase family. [4Fe-4S] cluster serves as cofactor. Requires Mo-bis(molybdopterin guanine dinucleotide) as cofactor.

The protein resides in the cell membrane. It catalyses the reaction nitrate + a quinol = a quinone + nitrite + H2O. Its function is as follows. The alpha chain is the actual site of nitrate reduction. In Mycobacterium tuberculosis (strain CDC 1551 / Oshkosh), this protein is Nitrate reductase alpha subunit (narG).